Consider the following 224-residue polypeptide: 7-cyano-7-deazaguanine synthase (224 aa).

Residue 12 to 22 (LSGGLDSSTVT) participates in ATP binding. The Zn(2+) site is built by Cys-193, Cys-201, Cys-204, and Cys-207.

The protein belongs to the QueC family. Requires Zn(2+) as cofactor.

The enzyme catalyses 7-carboxy-7-deazaguanine + NH4(+) + ATP = 7-cyano-7-deazaguanine + ADP + phosphate + H2O + H(+). Its pathway is purine metabolism; 7-cyano-7-deazaguanine biosynthesis. Catalyzes the ATP-dependent conversion of 7-carboxy-7-deazaguanine (CDG) to 7-cyano-7-deazaguanine (preQ(0)). This Prochlorococcus marinus subsp. pastoris (strain CCMP1986 / NIES-2087 / MED4) protein is 7-cyano-7-deazaguanine synthase.